Here is a 248-residue protein sequence, read N- to C-terminus: Ubiquinone biosynthesis O-methyltransferase (248 aa).

The S-adenosyl-L-methionine site is built by Arg-41, Gly-72, Asp-93, and Met-136.

This sequence belongs to the methyltransferase superfamily. UbiG/COQ3 family.

It carries out the reaction a 3-demethylubiquinol + S-adenosyl-L-methionine = a ubiquinol + S-adenosyl-L-homocysteine + H(+). The catalysed reaction is a 3-(all-trans-polyprenyl)benzene-1,2-diol + S-adenosyl-L-methionine = a 2-methoxy-6-(all-trans-polyprenyl)phenol + S-adenosyl-L-homocysteine + H(+). It functions in the pathway cofactor biosynthesis; ubiquinone biosynthesis. O-methyltransferase that catalyzes the 2 O-methylation steps in the ubiquinone biosynthetic pathway. In Rhizobium etli (strain CIAT 652), this protein is Ubiquinone biosynthesis O-methyltransferase.